Here is a 160-residue protein sequence, read N- to C-terminus: Cytochrome c-type biogenesis protein CcmE (160 aa).

At 1-8 (MSAPRKTR) the chain is on the cytoplasmic side. Residues 9–29 (LYAILAVICGAVLTVALTLYA) form a helical; Signal-anchor for type II membrane protein membrane-spanning segment. Residues 30–160 (LSSNIDLFYT…PAAVTEGKRL (131 aa)) are Periplasmic-facing. Residues histidine 130 and tyrosine 134 each contribute to the heme site.

Belongs to the CcmE/CycJ family.

The protein resides in the cell inner membrane. Its function is as follows. Heme chaperone required for the biogenesis of c-type cytochromes. Transiently binds heme delivered by CcmC and transfers the heme to apo-cytochromes in a process facilitated by CcmF and CcmH. This chain is Cytochrome c-type biogenesis protein CcmE, found in Pectobacterium carotovorum subsp. carotovorum (strain PC1).